Consider the following 408-residue polypeptide: Argininosuccinate synthase (408 aa).

ATP is bound by residues 11–19 (AYSGGLDTS) and Ala38. Residues Tyr91 and Ser96 each contribute to the L-citrulline site. Gly121 provides a ligand contact to ATP. L-aspartate is bound by residues Thr123, Asn127, and Asp128. Position 127 (Asn127) interacts with L-citrulline. The L-citrulline site is built by Arg131, Ser182, Ser191, Glu267, and Tyr279.

Belongs to the argininosuccinate synthase family. Type 1 subfamily. As to quaternary structure, homotetramer.

It localises to the cytoplasm. It catalyses the reaction L-citrulline + L-aspartate + ATP = 2-(N(omega)-L-arginino)succinate + AMP + diphosphate + H(+). Its pathway is amino-acid biosynthesis; L-arginine biosynthesis; L-arginine from L-ornithine and carbamoyl phosphate: step 2/3. The sequence is that of Argininosuccinate synthase from Azorhizobium caulinodans (strain ATCC 43989 / DSM 5975 / JCM 20966 / LMG 6465 / NBRC 14845 / NCIMB 13405 / ORS 571).